The sequence spans 1244 residues: ATP-dependent RNA helicase DHX8 (1244 aa).

A Glycyl lysine isopeptide (Lys-Gly) (interchain with G-Cter in SUMO2) cross-link involves residue Lys140. Disordered regions lie at residues 152–289 and 361–396; these read LMPS…PAIG and DVDQETGEDLNPNRRRNLVGETNEETSMRNPDRPTH. The segment covering 160-169 has biased composition (basic and acidic residues); that stretch reads EKQRDPEHRD. Residues 170 to 179 are compositionally biased toward basic residues; it reads RTKKKKRSRS. Over residues 180–220 the composition is skewed to basic and acidic residues; sequence RDRDRDRDRDRDRDRDRDRDRDKDRERDRDRERDRERDRER. Basic residues predominate over residues 221-234; sequence DHKRRHRSRSRSHS. The segment covering 256-283 has biased composition (basic and acidic residues); the sequence is FKDRKDREKYGERNLDRWRDKHVDRPPP. The 72-residue stretch at 289 to 360 folds into the S1 motif domain; that stretch reads GDIYNGKVTS…TGTKTSLSMK (72 aa). A compositionally biased stretch (basic and acidic residues) spans 386 to 395; that stretch reads TSMRNPDRPT. At Ser419 the chain carries Phosphoserine. Residue Lys423 forms a Glycyl lysine isopeptide (Lys-Gly) (interchain with G-Cter in SUMO2) linkage. Residue Ser484 is modified to Phosphoserine. The Helicase ATP-binding domain maps to 599-762; sequence VQAVHDNQIL…FYEAPIFTIP (164 aa). Residue 612–619 coordinates ATP; it reads GETGSGKT. The DEAH box signature appears at 709–712; sequence DEAH. Positions 780-960 constitute a Helicase C-terminal domain; sequence YLDASLITVM…STVLSLKAMG (181 aa).

This sequence belongs to the DEAD box helicase family. DEAH subfamily. DDX8/PRP22 sub-subfamily. Identified in the spliceosome C complex. Interacts with ARRB2; the interaction is detected in the nucleus upon OR1D2 stimulation. Interacts with SRRM2. Interacts with CACTIN.

Its subcellular location is the nucleus. It carries out the reaction ATP + H2O = ADP + phosphate + H(+). Functionally, involved in pre-mRNA splicing as component of the spliceosome. Facilitates nuclear export of spliced mRNA by releasing the RNA from the spliceosome. This is ATP-dependent RNA helicase DHX8 (Dhx8) from Mus musculus (Mouse).